The following is a 1297-amino-acid chain: Probable bifunctional E2/E3 enzyme R795 (1297 aa).

The RING-type; atypical zinc-finger motif lies at cysteine 74–asparagine 128. The U-box domain maps to glutamate 678 to isoleucine 750. Residues glutamate 899–isoleucine 1082 form the VWFA domain. One can recognise a UBC core domain in the interval glutamine 1133–leucine 1279. Cysteine 1217 serves as the catalytic Glycyl thioester intermediate.

The protein in the C-terminal section; belongs to the ubiquitin-conjugating enzyme family.

It carries out the reaction S-ubiquitinyl-[E2 ubiquitin-conjugating enzyme]-L-cysteine + [acceptor protein]-L-lysine = [E2 ubiquitin-conjugating enzyme]-L-cysteine + N(6)-ubiquitinyl-[acceptor protein]-L-lysine.. The catalysed reaction is S-ubiquitinyl-[E1 ubiquitin-activating enzyme]-L-cysteine + [E2 ubiquitin-conjugating enzyme]-L-cysteine = [E1 ubiquitin-activating enzyme]-L-cysteine + S-ubiquitinyl-[E2 ubiquitin-conjugating enzyme]-L-cysteine.. Its pathway is protein modification; protein ubiquitination. In terms of biological role, catalyzes the covalent attachment of ubiquitin to other proteins. Also acts as an E3 ubiquitin-protein ligase. The protein is Probable bifunctional E2/E3 enzyme R795 of Acanthamoeba polyphaga (Amoeba).